Here is a 116-residue protein sequence, read N- to C-terminus: Tyrosine-protein phosphatase 14 (116 aa).

A Tyrosine-protein phosphatase domain is found at 1 to 116; that stretch reads WRMITQEKAQ…SLKNPGPVIV (116 aa). Aspartate 84 serves as a coordination point for substrate.

Belongs to the protein-tyrosine phosphatase family.

It catalyses the reaction O-phospho-L-tyrosyl-[protein] + H2O = L-tyrosyl-[protein] + phosphate. The sequence is that of Tyrosine-protein phosphatase 14 (STY-14) from Styela plicata (Wrinkled sea squirt).